Consider the following 212-residue polypeptide: Hemagglutinin 2 (212 aa).

Its subcellular location is the secreted. Its function is as follows. Induces agglutination of neuraminidase-treated erythrocytes. The polypeptide is Hemagglutinin 2 (hag2) (Eikenella corrodens).